The following is a 459-amino-acid chain: Serine/threonine-protein kinase 12 (459 aa).

A disordered region spans residues 1 to 30; that stretch reads MEEDYQQPRFTIGRQSSMAPEKIPEPSVHS. 3 ANK repeats span residues 42-71, 75-104, and 108-137; these read DGGV…DANY, DDRT…EVDP, and WGST…KHPM. The 316-residue stretch at 102-417 folds into the Protein kinase domain; it reads VDPKDRWGST…EIIKRLESIL (316 aa). ATP contacts are provided by residues 108–116 and lysine 184; that span reads WGSTPFADA. Aspartate 281 acts as the Proton acceptor in catalysis.

The protein belongs to the protein kinase superfamily. Ser/Thr protein kinase family. In terms of assembly, interacts with BLUS1, PHOT1 and PHOT2. Accumulates in leaves, stems, petioles and roots, especially in guard cells.

The protein resides in the cytoplasm. Its subcellular location is the cytosol. It carries out the reaction L-seryl-[protein] + ATP = O-phospho-L-seryl-[protein] + ADP + H(+). The catalysed reaction is L-threonyl-[protein] + ATP = O-phospho-L-threonyl-[protein] + ADP + H(+). In terms of biological role, serine/threonine protein kinase that phosphorylates proteins on serine and threonine residues. Mediates blue light-dependent stomatal opening in guard cells by promoting plasma membrane-type ATPases (AHA1 and AHA2) phosphorylation. This chain is Serine/threonine-protein kinase 12, found in Arabidopsis thaliana (Mouse-ear cress).